We begin with the raw amino-acid sequence, 390 residues long: MPVIKGPQVFPRAEFLRRLNAVKLEMGRLEIDALIVGSSADITYLTGYTAKSGYVPQALVISSNDEEPTFILRRQDAPAAIHQTFMDRDKVIGYSEALIGNPDKDGYDAVVDFLNERDGANKRGVGVQLGYLSVRSAEKFKTRLPSARIVDCTHSVAWIRMIKSDLEISMMRDAAAIADAGVQKAFEVIRPGVREADVMADVAAQLARGTNGKAGTDLASMYFCSSPRTGTCHIRWSEDVIRDGSQINLEIAGVRHGYVSAIMRTFSVGAPSDRLRRIHDAEVLGLEAALSTVKPGATCSDVANAFYRTIEKSGFQKDSRCGYAIGIDWSEPTASLKDGDMTKLKPNMTFHLMLGNWIEEDFGYVLSETFRVTEAGCEVLTKSPRQLCVI.

It belongs to the peptidase M24 family.

This is an uncharacterized protein from Sinorhizobium fredii (strain NBRC 101917 / NGR234).